Here is a 60-residue protein sequence, read N- to C-terminus: Potassium channel toxin alpha-KTx 12.5 (60 aa).

The signal sequence occupies residues methionine 1–cysteine 22. 3 disulfide bridges follow: cysteine 30–cysteine 51, cysteine 36–cysteine 56, and cysteine 40–cysteine 58.

The protein belongs to the short scorpion toxin superfamily. Potassium channel inhibitor family. Alpha-KTx 12 subfamily. Expressed by the venom gland.

Its subcellular location is the secreted. Functionally, this recombinant toxin inhibits the mammalian voltage-gated potassium channels Kv1.3/KCNA3 (IC(50)=28 nM). Kv1.1/KCNA1 and Kv1.2/KCNA2 potassium channels are also weakly inhibited (IC(50)=1.73 uM and IC(50)=12.63 uM, respectively). The polypeptide is Potassium channel toxin alpha-KTx 12.5 (Lychas mucronatus (Chinese swimming scorpion)).